A 500-amino-acid polypeptide reads, in one-letter code: Glutelin type-B 4 (500 aa).

Residues 1 to 24 (MATIAFSRLSIYFCVLLLCHGSMA) form the signal peptide. Intrachain disulfides connect Cys-45-Cys-78 and Cys-121-Cys-310. Cupin type-1 domains lie at 50-245 (LQAF…LVAK) and 316-465 (LNIE…EQAR). The span at 481–493 (RYQQQTYPGFSNE) shows a compositional bias: polar residues. The tract at residues 481–500 (RYQQQTYPGFSNESENEALE) is disordered.

Belongs to the 11S seed storage protein (globulins) family. As to quaternary structure, hexamer; each subunit is composed of an acidic and a basic chain derived from a single precursor and linked by a disulfide bond. In terms of tissue distribution, expressed in endosperm (at protein level).

Seed storage protein. This chain is Glutelin type-B 4 (GLUB4), found in Oryza sativa subsp. japonica (Rice).